Consider the following 427-residue polypeptide: Light-independent protochlorophyllide reductase subunit N (427 aa).

Residues Cys-28, Cys-53, and Cys-114 each coordinate [4Fe-4S] cluster.

This sequence belongs to the BchN/ChlN family. In terms of assembly, protochlorophyllide reductase is composed of three subunits; BchL, BchN and BchB. Forms a heterotetramer of two BchB and two BchN subunits. The cofactor is [4Fe-4S] cluster.

It carries out the reaction chlorophyllide a + oxidized 2[4Fe-4S]-[ferredoxin] + 2 ADP + 2 phosphate = protochlorophyllide a + reduced 2[4Fe-4S]-[ferredoxin] + 2 ATP + 2 H2O. It functions in the pathway porphyrin-containing compound metabolism; bacteriochlorophyll biosynthesis (light-independent). Component of the dark-operative protochlorophyllide reductase (DPOR) that uses Mg-ATP and reduced ferredoxin to reduce ring D of protochlorophyllide (Pchlide) to form chlorophyllide a (Chlide). This reaction is light-independent. The NB-protein (BchN-BchB) is the catalytic component of the complex. The chain is Light-independent protochlorophyllide reductase subunit N from Dinoroseobacter shibae (strain DSM 16493 / NCIMB 14021 / DFL 12).